Reading from the N-terminus, the 308-residue chain is Aspartate carbamoyltransferase catalytic subunit (308 aa).

Residues R51 and T52 each contribute to the carbamoyl phosphate site. K79 is a binding site for L-aspartate. The carbamoyl phosphate site is built by R101, H130, and Q133. 2 residues coordinate L-aspartate: R163 and R215. Carbamoyl phosphate is bound by residues A258 and P259.

It belongs to the aspartate/ornithine carbamoyltransferase superfamily. ATCase family. Heterododecamer (2C3:3R2) of six catalytic PyrB chains organized as two trimers (C3), and six regulatory PyrI chains organized as three dimers (R2).

The catalysed reaction is carbamoyl phosphate + L-aspartate = N-carbamoyl-L-aspartate + phosphate + H(+). It functions in the pathway pyrimidine metabolism; UMP biosynthesis via de novo pathway; (S)-dihydroorotate from bicarbonate: step 2/3. Its function is as follows. Catalyzes the condensation of carbamoyl phosphate and aspartate to form carbamoyl aspartate and inorganic phosphate, the committed step in the de novo pyrimidine nucleotide biosynthesis pathway. The sequence is that of Aspartate carbamoyltransferase catalytic subunit from Pediococcus pentosaceus (strain ATCC 25745 / CCUG 21536 / LMG 10740 / 183-1w).